Consider the following 684-residue polypeptide: Probable pectin methyltransferase QUA2 (684 aa).

The segment at 1–35 (MSMPLQRGISGVRVSDSSDDLRDSQMKDKTERARS) is disordered. Topologically, residues 1 to 86 (MSMPLQRGIS…RHRLMLLFLK (86 aa)) are cytoplasmic. Residues 19-35 (DDLRDSQMKDKTERARS) are compositionally biased toward basic and acidic residues. Residues 87–107 (ISLVLIVVIALAGSFWWTISI) traverse the membrane as a helical; Signal-anchor for type II membrane protein segment. The Lumenal segment spans residues 108–684 (STSSRGHVYH…QKPFTKRQSI (577 aa)). N-linked (GlcNAc...) asparagine glycosylation is found at Asn161 and Asn476.

This sequence belongs to the methyltransferase superfamily. Ubiquitous.

It localises to the golgi apparatus membrane. It participates in glycan metabolism; pectin biosynthesis. May be involved in the synthesis of homogalacturonan. Required for normal cell adhesion and plant development. The protein is Probable pectin methyltransferase QUA2 (QUA2) of Arabidopsis thaliana (Mouse-ear cress).